A 715-amino-acid polypeptide reads, in one-letter code: Fatty acid oxidation complex subunit alpha (715 aa).

Positions 1–190 (MIYQGKAITV…KVGAVDAVVA (190 aa)) are enoyl-CoA hydratase/isomerase. Substrate is bound at residue D297. Residues 312–715 (HDAKQAAVLG…MAKNGQRFFN (404 aa)) form a 3-hydroxyacyl-CoA dehydrogenase region. NAD(+) contacts are provided by residues M325, D344, 401–403 (VVE), K408, and S430. The For 3-hydroxyacyl-CoA dehydrogenase activity role is filled by H451. Residue N454 coordinates NAD(+). 2 residues coordinate substrate: N501 and Y660.

The protein in the N-terminal section; belongs to the enoyl-CoA hydratase/isomerase family. This sequence in the C-terminal section; belongs to the 3-hydroxyacyl-CoA dehydrogenase family. Heterotetramer of two alpha chains (FadB) and two beta chains (FadA).

The catalysed reaction is a (3S)-3-hydroxyacyl-CoA + NAD(+) = a 3-oxoacyl-CoA + NADH + H(+). It catalyses the reaction a (3S)-3-hydroxyacyl-CoA = a (2E)-enoyl-CoA + H2O. It carries out the reaction a 4-saturated-(3S)-3-hydroxyacyl-CoA = a (3E)-enoyl-CoA + H2O. The enzyme catalyses (3S)-3-hydroxybutanoyl-CoA = (3R)-3-hydroxybutanoyl-CoA. The catalysed reaction is a (3Z)-enoyl-CoA = a 4-saturated (2E)-enoyl-CoA. It catalyses the reaction a (3E)-enoyl-CoA = a 4-saturated (2E)-enoyl-CoA. Its pathway is lipid metabolism; fatty acid beta-oxidation. Functionally, involved in the aerobic and anaerobic degradation of long-chain fatty acids via beta-oxidation cycle. Catalyzes the formation of 3-oxoacyl-CoA from enoyl-CoA via L-3-hydroxyacyl-CoA. It can also use D-3-hydroxyacyl-CoA and cis-3-enoyl-CoA as substrate. The chain is Fatty acid oxidation complex subunit alpha from Ectopseudomonas oleovorans (Pseudomonas oleovorans).